The sequence spans 154 residues: Deoxyuridine 5'-triphosphate nucleotidohydrolase (154 aa).

Substrate-binding positions include 64–66 (RSG), Asn77, 81–83 (TVD), and Lys91.

Belongs to the dUTPase family. In terms of assembly, homotrimer. It depends on Mg(2+) as a cofactor.

The enzyme catalyses dUTP + H2O = dUMP + diphosphate + H(+). It functions in the pathway pyrimidine metabolism; dUMP biosynthesis; dUMP from dCTP (dUTP route): step 2/2. Its function is as follows. This enzyme is involved in nucleotide metabolism: it produces dUMP, the immediate precursor of thymidine nucleotides and it decreases the intracellular concentration of dUTP so that uracil cannot be incorporated into DNA. The protein is Deoxyuridine 5'-triphosphate nucleotidohydrolase of Mycobacterium leprae (strain Br4923).